Reading from the N-terminus, the 197-residue chain is Molybdenum cofactor guanylyltransferase (197 aa).

GTP is bound by residues 10-12 (LAG), lysine 23, aspartate 69, and aspartate 99. Aspartate 99 is a binding site for Mg(2+).

The protein belongs to the MobA family. As to quaternary structure, monomer. The cofactor is Mg(2+).

It localises to the cytoplasm. The enzyme catalyses Mo-molybdopterin + GTP + H(+) = Mo-molybdopterin guanine dinucleotide + diphosphate. In terms of biological role, transfers a GMP moiety from GTP to Mo-molybdopterin (Mo-MPT) cofactor (Moco or molybdenum cofactor) to form Mo-molybdopterin guanine dinucleotide (Mo-MGD) cofactor. The chain is Molybdenum cofactor guanylyltransferase from Serratia proteamaculans (strain 568).